Consider the following 108-residue polypeptide: MTDKQINLEVAYALPDRQALLEVVVEMGHTVEEAIKASGILQRFDDIDLSKSKVGIWNRTCKLSDVPQDGDRIEIYRPLIADPKEARRRRAEKAKEEGRANKVTGGRA.

The tract at residues 86-108 (ARRRRAEKAKEEGRANKVTGGRA) is disordered.

It belongs to the UPF0125 (RnfH) family.

This is Protein RnfH from Pseudoalteromonas atlantica (strain T6c / ATCC BAA-1087).